We begin with the raw amino-acid sequence, 435 residues long: Estrogen-related receptor gamma (435 aa).

Residues 1 to 64 form a disordered region; the sequence is MSNKDRHIDS…GLDSPPLYPS (64 aa). Polar residues predominate over residues 10–29; that stretch reads SSCSSFIKTEPSSPASLTDS. Residues 34–47 show a composition bias toward low complexity; that stretch reads SPGGSSDASGSYSS. The nuclear receptor DNA-binding region spans 102-177; the sequence is KRLCLVCGDI…VGMLKEGVRL (76 aa). 2 consecutive NR C4-type zinc fingers follow at residues 105-125 and 141-160; these read CLVCGDIASGYHYGVASCEAC and CPATNECEITKRRRKSCQAC. One can recognise an NR LBD domain in the interval 210–434; sequence PYNKIVSHLL…KLFSEMLEAK (225 aa).

This sequence belongs to the nuclear hormone receptor family. NR3 subfamily. As to quaternary structure, homodimer. Interacts with NRIP1, NCOA1 and NCOR2. Binds TLE1, PNRC1 and PNRC2. Binds GRIP1. Acetylated by PCAF/KAT2 (in vitro).

Its subcellular location is the nucleus. Orphan receptor that acts as a transcription activator in the absence of bound ligand. Binds specifically to an estrogen response element and activates reporter genes controlled by estrogen response elements. Induces the expression of PERM1 in the skeletal muscle. The protein is Estrogen-related receptor gamma (ESRRG) of Pongo abelii (Sumatran orangutan).